A 94-amino-acid chain; its full sequence is MKYQPLYDRVLVEPIQNDEAHGKILIPDTAKEKPTEGIVVMVGGGYRNDKGDITPLKVKKGDTIVYTKWAGTEIKLESKDYVVIKESDILLVKS.

Belongs to the GroES chaperonin family. Heptamer of 7 subunits arranged in a ring. Interacts with the chaperonin GroEL.

It localises to the cytoplasm. Functionally, together with the chaperonin GroEL, plays an essential role in assisting protein folding. The GroEL-GroES system forms a nano-cage that allows encapsulation of the non-native substrate proteins and provides a physical environment optimized to promote and accelerate protein folding. GroES binds to the apical surface of the GroEL ring, thereby capping the opening of the GroEL channel. The polypeptide is Co-chaperonin GroES (Orientia tsutsugamushi (Rickettsia tsutsugamushi)).